An 878-amino-acid chain; its full sequence is Probable outer membrane protein PmpI (878 aa).

The first 24 residues, 1-24 (MRPDHMNFCCLCAAILSSTAVLFG), serve as a signal peptide directing secretion. Residues 360 to 371 (SSKESPLPSSLQ) are compositionally biased toward low complexity. Residues 360–381 (SSKESPLPSSLQASVTSPTPAT) are disordered. Over residues 372-381 (ASVTSPTPAT) the composition is skewed to polar residues. The Autotransporter domain occupies 602–878 (GGAYLFGTWG…SLDLGTTYRF (277 aa)).

It belongs to the PMP outer membrane protein family.

It is found in the secreted. The protein localises to the cell wall. It localises to the cell outer membrane. This chain is Probable outer membrane protein PmpI (pmpI), found in Chlamydia trachomatis serovar D (strain ATCC VR-885 / DSM 19411 / UW-3/Cx).